The following is a 563-amino-acid chain: Probable terpene synthase 4 (563 aa).

Mg(2+) contacts are provided by D316, D320, and E469. The DDXXD motif motif lies at 316 to 320 (DDIFD).

This sequence belongs to the terpene synthase family. Mg(2+) serves as cofactor.

In terms of biological role, probable sesquiterpene synthase. In Ricinus communis (Castor bean), this protein is Probable terpene synthase 4 (TPS4).